The sequence spans 264 residues: ECF RNA polymerase sigma factor BldN (264 aa).

The not required for transcription in vitro stretch occupies residues 1 to 87; the sequence is MYPHVGVDAS…PAADSDSARM (87 aa). Positions 64-83 are disordered; sequence RSSSSGAAATTHRRPAADSD. Residues 105–172 form a sigma-70 factor domain-2 region; that stretch reads LYDQYSDTVY…LVADHFKSSR (68 aa). Residues 129 to 132 carry the Polymerase core binding motif; the sequence is DLTS. The sigma-70 factor domain-4 stretch occupies residues 204-255; sequence ALLDAVRRLNPQQQECVTLRFLQGLSVAETARVMGKNEGAIKTLQYRAVRTL.

The protein belongs to the sigma-70 factor family. ECF subfamily. Post-translationally, two forms of protein exist; a 35 kDa form in early growth and a 28 kDa form seen in later stages (at protein level). In liquid culture the larger form accumulates to higher level than on solid media. The shorter form results from processing just upstream of Met-87; the exact position is unknown. There are 4 possible start codons; mutation of the first prevents protein production while mutation of the other 3 (Val-44, Met-87 and Met-88) permits production of both forms. Introduction of stop codons between the first and second, or second and third possible start codons also prevents protein production, corroborating that the annotated start codon is the correct one.

Sigma factors are initiation factors that promote the attachment of RNA polymerase to specific initiation sites and are then released. Extracytoplasmic function (ECF) sigma factors are usually held in an inactive form by an anti-sigma factor until released. ECF sigma factor involved in aerial mycelium formation, required for translation from the bldMp1 promoter. Expressed as a preprotein; processing and accumulation of the mature protein starts as aerial mycelium formation and sporulation commence. Activates expression of about 17 genes, including those for rdlA and most of the chaplins (chpA to chpH); chaplin activation is indirect. The protein is ECF RNA polymerase sigma factor BldN of Streptomyces coelicolor (strain ATCC BAA-471 / A3(2) / M145).